The chain runs to 343 residues: Aspartate-semialdehyde dehydrogenase (343 aa).

NADP(+) is bound at residue 11-14; the sequence is TGMV. R109 provides a ligand contact to phosphate. C148 (acyl-thioester intermediate) is an active-site residue. Q174 contacts substrate. 177–178 serves as a coordination point for NADP(+); the sequence is SG. Residue E200 participates in substrate binding. K203 provides a ligand contact to phosphate. Position 233 (R233) interacts with substrate. H240 (proton acceptor) is an active-site residue. 321-322 contributes to the NADP(+) binding site; sequence NT.

The protein belongs to the aspartate-semialdehyde dehydrogenase family. As to quaternary structure, homodimer.

The catalysed reaction is L-aspartate 4-semialdehyde + phosphate + NADP(+) = 4-phospho-L-aspartate + NADPH + H(+). It functions in the pathway amino-acid biosynthesis; L-lysine biosynthesis via DAP pathway; (S)-tetrahydrodipicolinate from L-aspartate: step 2/4. It participates in amino-acid biosynthesis; L-methionine biosynthesis via de novo pathway; L-homoserine from L-aspartate: step 2/3. Its pathway is amino-acid biosynthesis; L-threonine biosynthesis; L-threonine from L-aspartate: step 2/5. Its function is as follows. Catalyzes the NADPH-dependent formation of L-aspartate-semialdehyde (L-ASA) by the reductive dephosphorylation of L-aspartyl-4-phosphate. This is Aspartate-semialdehyde dehydrogenase from Archaeoglobus fulgidus (strain ATCC 49558 / DSM 4304 / JCM 9628 / NBRC 100126 / VC-16).